Reading from the N-terminus, the 1678-residue chain is MSRLQPQQQQRGRSSSFKDNFQIQKPLQSLTPSEQQQQQQQQQQQQQQQQQQQQQQQQQNNANNNNNNNNNKFNNQYIQQMKNVENDIKKWIGEKCSSSLSDDFLEKDLMESLCTGTILCVLINMIKQGTIQKIHLQPNYLQRVENIRNYLRACWLFGLHSKYFFPSSYLLSMTIENNDNSNSSKTTTNNNNNNNNNNNNNNNNNNNNNNNNNNRAIITSPNKNGGVNTMIVNLEYKEKIMINLTELCKISLKIKNFGSFLQLSSSSSSTPPPPINNNNNNNNNNNNNNNNNNDLLISNNSSNISSPNSFSDSPMGFSSSINSSSNNSNLNTPNNYNNTNNNNNNNNNNNNNNNNNINNLTPQMIISSPTSTSSTPPLPPCANNINNNNLKKRTKIPKNNNNNNNNNNNNNNNNNNNNNNNNNNNNNNKIIIKRDCKKVYRKRKSSNCDNDDNGSNSDSDSSDSSDSSDSDSDSLLSSDGTPIILSQSSNPESVSFKSFIKEILHLKNIISKQDKTITSQKQTIETLEKDLEFQKQLTKKLLSSPIDLSNFIETSSDPNGAIPVSIQAFTRQIQQIQTLQQQNLSLETELSKTNEHLSTNIRKNSKLENEVLSIETELLNLRMKYANTLSSSNSNGNNNSNNNSLGCNNSINGSSSGGGGNNSSTSKGTLSRTISQPFPLRKSISHSNIITSPVNSHQQQQQQNQLSQSQTTSPKNTSASYNNGILSKSSIVSNTNTNSTYKFGSSTGILKVSATLQQKQQQQQQQQNQQQQQNQQQQQQNQQQQNQQQQNQQKQNQQQQNQQQQQQQQQQQQQNQQQQQQQQQQQQQQQQQQNQQQQQNNQLSQSQQLQQQQNQQINNLIDSPLIISNSSNQQIESESIESDSDYDKDMVDFGKKIVSALISSSNHVEMSEIYKMNDILTNETSRRQICIVLEEETKINQLKLPMNENSFEVTLYLVNTILQCIHEAPSKDYFSLKLIMESSRILNRKKVNGSCEFIQEFIKDHPTWKDIKFWEEQYWDELIIKHQQFSGSGSSSSSNTGGSIVTTMTTTTTVTSAITSSSSTTSDDFDVDYTELVNTLLISYVYNLASWGLSKSDVKEFTISMSKKSFLKSNELEKLIEQVTSTVELSFTSDHNVCKGPHSFVLKSFRIISECNYCRQYIWGVRGIVAREAFECVGCKYKTHKKCLKEASEKTFCSSPNVGAPFNVKHEMHVGLAIQGLPSGWRTLLLQSGFQDYEIQQHQEDVLDVLEFHHVYNEKQQNSIKLLTNNSNNNNNNNNSNNNLQQQQQQNQQLKQKLNITNNQQNNTIININITSPSISVNNNTYNNNNNNNNNNEINPSSPNNNNNYYDSLLEIEEPSFTLKDLVSLENPIDLYKVREVVGGGSTGKVYVGENSITGEKVAIKKMKVDNNNIKNIINEISTMKNSKHKNVIKYVSSHLVINHIWLIMEYMSYGSLTDLISNCINIQCNGNNQQQQQQQQQQQTYFIESHIAYICQQVLQGMDYIHKGHRTHRDIKSDNILLGKDGSVKIADFGFVANLTRKKLQRNSVVGTPYFMAPELIRGNQYNHKVDIWSLGILARELSEGEPPYAKYPPVRALFLLTLEGVPDFKEPNKWSSDFIEFVNLCLNLDDKRRPDAHYLLRHPFLKKACSSREFADKVEEIYNTRKNQFSDINFNF.

A compositionally biased stretch (low complexity) spans Met-1–Ser-15. Disordered stretches follow at residues Met-1 to Phe-73, Asn-180 to Asn-224, Gln-262 to Asn-428, and Lys-442 to Ser-489. Residues Phe-17–Glu-34 are compositionally biased toward polar residues. 2 stretches are compositionally biased toward low complexity: residues Gln-35 to Phe-73 and Asn-180 to Asn-214. A Calponin-homology (CH) domain is found at Lys-82–Asn-189. A compositionally biased stretch (polar residues) spans Arg-215–Asn-224. Composition is skewed to low complexity over residues Asn-276–Asn-359 and Asn-399–Asn-428. Acidic residues predominate over residues Asp-460 to Ser-472. Coiled-coil stretches lie at residues Lys-512–Leu-542 and Thr-570–Thr-628. Low complexity-rich tracts occupy residues Ser-631–Ser-654, Asn-662–Ser-671, and Asn-695–Ser-713. Disordered stretches follow at residues Ser-631–Arg-672 and Pro-693–Asn-722. Residues Val-752–Asp-862 adopt a coiled-coil conformation. The segment at Pro-1141–Cys-1197 adopts a Phorbol-ester/DAG-type zinc-finger fold. A CRIB domain is found at Val-1202 to Gly-1215. Disordered regions lie at residues Leu-1267–Gln-1292 and Asn-1323–Asn-1346. The stretch at Asn-1269–Ile-1309 forms a coiled coil. The Protein kinase domain occupies Tyr-1376–Leu-1647. ATP contacts are provided by residues Val-1382 to Val-1390 and Lys-1405. Asp-1515 functions as the Proton acceptor in the catalytic mechanism.

This sequence belongs to the protein kinase superfamily. STE Ser/Thr protein kinase family. STE20 subfamily. The cofactor is Mg(2+).

It catalyses the reaction L-seryl-[protein] + ATP = O-phospho-L-seryl-[protein] + ADP + H(+). The catalysed reaction is L-threonyl-[protein] + ATP = O-phospho-L-threonyl-[protein] + ADP + H(+). This is Serine/threonine-protein kinase pakD from Dictyostelium discoideum (Social amoeba).